We begin with the raw amino-acid sequence, 348 residues long: Phenylalanine--tRNA ligase alpha subunit (348 aa).

Residue glutamate 268 coordinates Mg(2+).

Belongs to the class-II aminoacyl-tRNA synthetase family. Phe-tRNA synthetase alpha subunit type 1 subfamily. In terms of assembly, tetramer of two alpha and two beta subunits. Mg(2+) is required as a cofactor.

Its subcellular location is the cytoplasm. The enzyme catalyses tRNA(Phe) + L-phenylalanine + ATP = L-phenylalanyl-tRNA(Phe) + AMP + diphosphate + H(+). The polypeptide is Phenylalanine--tRNA ligase alpha subunit (Bordetella parapertussis (strain 12822 / ATCC BAA-587 / NCTC 13253)).